We begin with the raw amino-acid sequence, 223 residues long: Proteinase inhibitor type-2 TR8 (223 aa).

Residues 1–24 (MAIYKVALLLLFGMILLASDFEHA) form the signal peptide. Tandem repeats lie at residues 24 to 81 (AKAC…EWVS), 88 to 145 (KKAC…EWVS), and 152 to 209 (EKDC…EWVS). 8 disulfide bridges follow: Cys27-Cys120, Cys31-Cys116, Cys40-Cys126, Cys52-Cys95, Cys55-Cys73, Cys56-Cys91, Cys62-Cys104, and Cys119-Cys137.

This sequence belongs to the protease inhibitor I20 (potato type II proteinase inhibitor) family.

The chain is Proteinase inhibitor type-2 TR8 (ARPI) from Solanum lycopersicum (Tomato).